The primary structure comprises 357 residues: MSDSKNLNQERQKALDSAISQIEKAFGRGAIMKLKQGAIEKIDSISTGSIALDTALGIGGFPKGRIVEIFGPESSGKTTLALHVIAESQKKGGNCAFIDAEHALDIMYARKLGVNTGDLIVSQPDTGEQALHIVEYLVCSGAIDVIVVDSVAALTPRAEIEGDMGDQHMGLQARLLSHALRKLTSIVSKANCVLIFINQIRMKIGVVYGNPETTTGGNALKFYSSVRLDIRKVSAIKDKDVIIGNQTKVKVVKNKVAPPFKQVDFDIMYNEGISKVGEIIDMGVKLNIIEKAGSYYSYNSVRLGQGKENAKSYLKANCDTAHEIEQKIRSILASDNEVSCFNAEVNDNLHEVEETVF.

Residue 71–78 participates in ATP binding; the sequence is GPESSGKT.

This sequence belongs to the RecA family.

It localises to the cytoplasm. Its function is as follows. Can catalyze the hydrolysis of ATP in the presence of single-stranded DNA, the ATP-dependent uptake of single-stranded DNA by duplex DNA, and the ATP-dependent hybridization of homologous single-stranded DNAs. It interacts with LexA causing its activation and leading to its autocatalytic cleavage. In Ehrlichia chaffeensis (strain ATCC CRL-10679 / Arkansas), this protein is Protein RecA.